The primary structure comprises 306 residues: MSKVFICAAIPDELATREEGAVAVATAIEAGDERRARAKFHWQFLEHYPAAQDCAYKFIVCEDKPGIPRPALDSWDAEYMQENRWDEESASFVPVETESDPMNVTFDKLAPEVQNAVMVKFDTCENITVDMVISAQELLQEDMATFDGHIVEALMKMPEVNAMYPELKLHAIGWVKHKCIPGAKWPEIQAEMRIWKKRREGERKETGKYTSVVDLARARANQQYTENSTGKISPVIAAIHREYKQTWKTLDDELAYGRCFADRQNLMVCLRSMPNVFTGSCARMRCCLSENLLYRHRNGHIQAEWP.

This is an uncharacterized protein from Escherichia coli (strain K12).